We begin with the raw amino-acid sequence, 522 residues long: Sorting nexin-1 (522 aa).

Disordered regions lie at residues 1 to 84 (MASG…QDQE) and 115 to 142 (SLPP…QEDQ). Phosphoserine is present on residues S32 and S39. Over residues 35–45 (EAGDSDTEGED) the composition is skewed to acidic residues. Phosphothreonine occurs at positions 41 and 48. Positions 55 to 73 (KHQSPKITTSLLPINNGSK) are enriched in polar residues. 2 positions are modified to phosphoserine: S58 and S72. Acidic residues predominate over residues 132-142 (EELEEEEQEDQ). One can recognise a PX domain in the interval 143 to 272 (FDLTVGITDP…EFLEKEELPR (130 aa)). Positions 186, 188, and 214 each coordinate a 1,2-diacyl-sn-glycero-3-phospho-(1D-myo-inositol-3-phosphate). The residue at position 188 (S188) is a Phosphoserine. Position 237 is an N6-acetyllysine (K237). Residue R238 participates in a 1,2-diacyl-sn-glycero-3-phospho-(1D-myo-inositol-3-phosphate) binding. The residue at position 280 (S280) is a Phosphoserine. The membrane-binding amphipathic helix stretch occupies residues 281–298 (GAGLLKMFNKATDAVSKM). The region spanning 302 to 522 (MNESDIWFEE…AFLPEAKAIS (221 aa)) is the BAR domain.

It belongs to the sorting nexin family. Predominantly forms heterodimers with BAR domain-containing sorting nexins SNX5, SNX6 and SNX32; can self-associate to form homodimers. The heterodimers are proposed to self-assemble into helical arrays on the membrane to stabilize and expand local membrane curvature underlying endosomal tubule formation. Thought to be a component of the originally described retromer complex (also called SNX-BAR retromer) which is a pentamer containing the heterotrimeric retromer cargo-selective complex (CSC), also described as vacuolar protein sorting subcomplex (VPS) and a heterodimeric membrane-deforming subcomplex formed between SNX1 or SNX2 and SNX5 or SNX6 (also called SNX-BAR subcomplex); the respective CSC and SNX-BAR subcomplexes associate with low affinity. Interacts with SNX5, SNX6, SNX32, VPS26A, VPS29, VPS35, DRD5, DENND5A, KALRN, RHOG (GDP-bound form). The interaction with SNX2 is reported controversially. Interacts with DNAJC13; prevented by presence of HGS. Interacts with HGS.

The protein resides in the endosome membrane. Its subcellular location is the golgi apparatus. It is found in the trans-Golgi network membrane. It localises to the early endosome membrane. The protein localises to the cell projection. The protein resides in the lamellipodium. Functionally, involved in several stages of intracellular trafficking. Interacts with membranes containing phosphatidylinositol 3-phosphate (PtdIns(3P)) or phosphatidylinositol 3,5-bisphosphate (PtdIns(3,5)P2). Acts in part as component of the retromer membrane-deforming SNX-BAR subcomplex. The SNX-BAR retromer mediates retrograde transport of cargo proteins from endosomes to the trans-Golgi network (TGN) and is involved in endosome-to-plasma membrane transport for cargo protein recycling. The SNX-BAR subcomplex functions to deform the donor membrane into a tubular profile called endosome-to-TGN transport carrier (ETC). Can sense membrane curvature and has in vitro vesicle-to-membrane remodeling activity. Involved in retrograde endosome-to-TGN transport of lysosomal enzyme receptors (IGF2R, M6PR and SORT1) and Shiginella dysenteria toxin stxB. Plays a role in targeting ligand-activated EGFR to the lysosomes for degradation after endocytosis from the cell surface and release from the Golgi. Involvement in retromer-independent endocytic trafficking of P2RY1 and lysosomal degradation of protease-activated receptor-1/F2R. Promotes KALRN- and RHOG-dependent but retromer-independent membrane remodeling such as lamellipodium formation; the function is dependent on GEF activity of KALRN. Required for endocytosis of DRD5 upon agonist stimulation but not for basal receptor trafficking. The chain is Sorting nexin-1 (SNX1) from Homo sapiens (Human).